A 354-amino-acid chain; its full sequence is Muscleblind-like protein 3 (354 aa).

4 consecutive C3H1-type zinc fingers follow at residues 14–42 (WLTL…HPPR), 48–74 (NGRV…HPPP), 174–202 (SDKL…HPTD), and 210–236 (DNTV…HPPA).

Belongs to the muscleblind family. Highly expressed in the placenta.

It localises to the nucleus. The protein resides in the cytoplasm. Its function is as follows. Mediates pre-mRNA alternative splicing regulation. Acts either as activator or repressor of splicing on specific pre-mRNA targets. Inhibits cardiac troponin-T (TNNT2) pre-mRNA exon inclusion but induces insulin receptor (IR) pre-mRNA exon inclusion in muscle. Antagonizes the alternative splicing activity pattern of CELF proteins. May play a role in myotonic dystrophy pathophysiology (DM). Could inhibit terminal muscle differentiation, acting at approximately the time of myogenin induction. The polypeptide is Muscleblind-like protein 3 (MBNL3) (Homo sapiens (Human)).